Here is a 321-residue protein sequence, read N- to C-terminus: Annexin A5 (321 aa).

4 Annexin repeats span residues 15–86 (FDAR…SLMR), 87–158 (PARI…VLLQ), 170–242 (ALVE…AVVK), and 246–317 (SVPA…LLCG).

It belongs to the annexin family.

Its function is as follows. Collagen-binding protein. The sequence is that of Annexin A5 (ANXA5) from Gallus gallus (Chicken).